Consider the following 348-residue polypeptide: Protein RecA (348 aa).

Residue 65 to 72 (GPESSGKT) coordinates ATP. The tract at residues 326 to 348 (QMGSESLSSSSDDDDIKEESGEE) is disordered. Over residues 336–348 (SDDDDIKEESGEE) the composition is skewed to acidic residues.

The protein belongs to the RecA family.

It localises to the cytoplasm. Can catalyze the hydrolysis of ATP in the presence of single-stranded DNA, the ATP-dependent uptake of single-stranded DNA by duplex DNA, and the ATP-dependent hybridization of homologous single-stranded DNAs. It interacts with LexA causing its activation and leading to its autocatalytic cleavage. The sequence is that of Protein RecA from Campylobacter hominis (strain ATCC BAA-381 / DSM 21671 / CCUG 45161 / LMG 19568 / NCTC 13146 / CH001A).